The chain runs to 383 residues: BRISC and BRCA1-A complex member 2 (383 aa).

Met-1 bears the N-acetylmethionine mark. Ser-2 carries the phosphoserine modification. 2 UEV-like regions span residues 30 to 147 and 275 to 364; these read DATN…TLLE and IAAF…RAKA.

This sequence belongs to the BABAM2 family. As to quaternary structure, component of the ARISC complex, at least composed of UIMC1/RAP80, ABRAXAS1, BRCC3/BRCC36, BABAM2 and BABAM1/NBA1. Component of the BRCA1-A complex, at least composed of BRCA1, BARD1, UIMC1/RAP80, ABRAXAS1, BRCC3/BRCC36, BABAM2 and BABAM1/NBA1. In the BRCA1-A complex, interacts directly with ABRAXAS1, BRCC3/BRCC36 and BABAM1/NBA1. Binds polyubiquitin. Component of the BRISC complex, at least composed of ABRAXAS2, BRCC3/BRCC36, BABAM2 and BABAM1/NBA1. Identified in a complex with SHMT2 and the other subunits of the BRISC complex. Component of the BRCA1/BRCA2 containing complex (BRCC), which also contains BRCA1, BRCA2, BARD1, BRCC3/BRCC36 and RAD51. BRCC is a ubiquitin E3 ligase complex that enhances cellular survival following DNA damage. May interact with FAS and TNFRSF1A.

The protein resides in the cytoplasm. It is found in the nucleus. Functionally, component of the BRCA1-A complex, a complex that specifically recognizes 'Lys-63'-linked ubiquitinated histones H2A and H2AX at DNA lesions sites, leading to target the BRCA1-BARD1 heterodimer to sites of DNA damage at double-strand breaks (DSBs). The BRCA1-A complex also possesses deubiquitinase activity that specifically removes 'Lys-63'-linked ubiquitin on histones H2A and H2AX. In the BRCA1-A complex, it acts as an adapter that bridges the interaction between BABAM1/NBA1 and the rest of the complex, thereby being required for the complex integrity and modulating the E3 ubiquitin ligase activity of the BRCA1-BARD1 heterodimer. Component of the BRISC complex, a multiprotein complex that specifically cleaves 'Lys-63'-linked ubiquitin in various substrates. Within the BRISC complex, acts as an adapter that bridges the interaction between BABAM1/NBA1 and the rest of the complex, thereby being required for the complex integrity. The BRISC complex is required for normal mitotic spindle assembly and microtubule attachment to kinetochores via its role in deubiquitinating NUMA1. The BRISC complex plays a role in interferon signaling via its role in the deubiquitination of the interferon receptor IFNAR1; deubiquitination increases IFNAR1 activity by enhancing its stability and cell surface expression. Down-regulates the response to bacterial lipopolysaccharide (LPS) via its role in IFNAR1 deubiquitination. May play a role in homeostasis or cellular differentiation in cells of neural, epithelial and germline origins. May also act as a death receptor-associated anti-apoptotic protein, which inhibits the mitochondrial apoptotic pathway. May regulate TNF-alpha signaling through its interactions with TNFRSF1A; however these effects may be indirect. This chain is BRISC and BRCA1-A complex member 2 (BABAM2), found in Bos taurus (Bovine).